Reading from the N-terminus, the 1478-residue chain is GTPase-activating protein and VPS9 domain-containing protein 1 (1478 aa).

One can recognise a Ras-GAP domain in the interval 147-385; that stretch reads SYLLQVLRYL…AAFLDVVIGG (239 aa). Serine 227 bears the Phosphoserine mark. 2 positions are modified to phosphothreonine: threonine 390 and threonine 458. Position 460 is a phosphotyrosine (tyrosine 460). Position 466 is a phosphoserine (serine 466). Threonine 470 carries the post-translational modification Phosphothreonine. Residues serine 566 and serine 569 each carry the phosphoserine modification. Disordered regions lie at residues 574-608, 739-820, and 846-874; these read GISE…GSNG, ESCS…PPSQ, and HYAR…LPNF. Residues 578 to 588 are compositionally biased toward polar residues; the sequence is GPSNRSNSVSS. Phosphoserine is present on residues serine 742, serine 746, and serine 757. Residues 758-777 are compositionally biased toward polar residues; it reads SRPSTPGLSVVSGISATSED. Threonine 762 is subject to Phosphothreonine. At serine 766 the chain carries Phosphoserine. A compositionally biased stretch (basic and acidic residues) spans 778–789; the sequence is IPNKIEDLRSEC. Serine 876, serine 902, serine 903, serine 908, serine 914, and serine 966 each carry phosphoserine. Over residues 889 to 902 the composition is skewed to basic and acidic residues; sequence QRHSYPERLVRSRS. Disordered regions lie at residues 889–1023 and 1043–1064; these read QRHS…PRLS and TSPS…DRDL. Composition is skewed to basic and acidic residues over residues 954 to 975 and 997 to 1008; these read DSSR…DRNR and EKQEKDKDDLGP. A compositionally biased stretch (polar residues) spans 1012–1023; it reads STLTDDPSPRLS. Residues serine 1019, serine 1046, serine 1096, and serine 1103 each carry the phosphoserine modification. One can recognise a VPS9 domain in the interval 1338-1478; it reads ILRDQVLHEH…EFIKTIDDRK (141 aa).

Belongs to the GAPVD1 family. As to quaternary structure, interacts with TRIP10/CIP4. Interacts with RAB5A. (Microbial infection) Interacts with P.falciparum (strain 3D7) CK1. As to expression, expressed in erythrocytes (at protein level).

The protein localises to the membrane. The protein resides in the endosome. In terms of biological role, acts both as a GTPase-activating protein (GAP) and a guanine nucleotide exchange factor (GEF), and participates in various processes such as endocytosis, insulin receptor internalization or LC2A4/GLUT4 trafficking. Acts as a GEF for the Ras-related protein RAB31 by exchanging bound GDP for free GTP, leading to regulate LC2A4/GLUT4 trafficking. In the absence of insulin, it maintains RAB31 in an active state and promotes a futile cycle between LC2A4/GLUT4 storage vesicles and early endosomes, retaining LC2A4/GLUT4 inside the cells. Upon insulin stimulation, it is translocated to the plasma membrane, releasing LC2A4/GLUT4 from intracellular storage vesicles. Also involved in EGFR trafficking and degradation, possibly by promoting EGFR ubiquitination and subsequent degradation by the proteasome. Has GEF activity for Rab5 and GAP activity for Ras. In Homo sapiens (Human), this protein is GTPase-activating protein and VPS9 domain-containing protein 1 (GAPVD1).